The following is a 72-amino-acid chain: DNA-directed RNA polymerase subunit omega (72 aa).

Belongs to the RNA polymerase subunit omega family. In terms of assembly, the RNAP catalytic core consists of 2 alpha, 1 beta, 1 beta' and 1 omega subunit. When a sigma factor is associated with the core the holoenzyme is formed, which can initiate transcription.

The catalysed reaction is RNA(n) + a ribonucleoside 5'-triphosphate = RNA(n+1) + diphosphate. Its function is as follows. Promotes RNA polymerase assembly. Latches the N- and C-terminal regions of the beta' subunit thereby facilitating its interaction with the beta and alpha subunits. The protein is DNA-directed RNA polymerase subunit omega of Laribacter hongkongensis (strain HLHK9).